We begin with the raw amino-acid sequence, 640 residues long: Autophagy-related protein 20 (640 aa).

Composition is skewed to polar residues over residues Met1–Arg18 and Ala126–Ser153. Disordered regions lie at residues Met1–Val63 and Ala126–Lys156. Ser2 is subject to N-acetylserine. In terms of domain architecture, PX spans Met140–Trp301. A 1,2-diacyl-sn-glycero-3-phospho-(1D-myo-inositol-3-phosphate)-binding residues include Arg192, Ser194, Lys218, and Arg267. A phosphoserine mark is found at Ser361 and Ser363. Coiled coils occupy residues Leu475 to Met512 and Thr562 to Lys593.

This sequence belongs to the sorting nexin family. As to quaternary structure, forms a complex with SNX4 and ATG17.

The protein resides in the endosome membrane. Its subcellular location is the preautophagosomal structure membrane. In terms of biological role, required for cytoplasm to vacuole transport (Cvt), pexophagy and mitophagy. Also involved in endoplasmic reticulum-specific autophagic process and is essential for the survival of cells subjected to severe ER stress. Functions in protein retrieval from the endocytic pathway. Required for proper sorting of the v-SNARE protein SNC1. The chain is Autophagy-related protein 20 (ATG20) from Saccharomyces cerevisiae (strain ATCC 204508 / S288c) (Baker's yeast).